The chain runs to 96 residues: Transcription and mRNA export factor ENY2 (96 aa).

Belongs to the ENY2 family. In terms of assembly, component of the nuclear pore complex (NPC)-associated TREX-2 complex (transcription and export complex 2). Component of the SAGA transcription coactivator-HAT complex. Within the SAGA complex, participates in a subcomplex of SAGA called the DUB module (deubiquitination module).

It localises to the nucleus. It is found in the nucleoplasm. In terms of biological role, involved in mRNA export coupled transcription activation by association with both the TREX-2 and the SAGA complexes. The transcription regulatory histone acetylation (HAT) complex SAGA is a multiprotein complex that activates transcription by remodeling chromatin and mediating histone acetylation and deubiquitination. Within the SAGA complex, participates in a subcomplex that specifically deubiquitinates histones. The SAGA complex is recruited to specific gene promoters by activators, where it is required for transcription. The TREX-2 complex functions in docking export-competent ribonucleoprotein particles (mRNPs) to the nuclear entrance of the nuclear pore complex (nuclear basket). TREX-2 participates in mRNA export and accurate chromatin positioning in the nucleus by tethering genes to the nuclear periphery. This is Transcription and mRNA export factor ENY2 from Taeniopygia guttata (Zebra finch).